Here is an 85-residue protein sequence, read N- to C-terminus: High affinity immunoglobulin epsilon receptor subunit gamma (85 aa).

An N-terminal signal peptide occupies residues 1–18; it reads MIPAVVLLLLLLVEQAAA. Residues 19–23 lie on the Extracellular side of the membrane; the sequence is LGEPQ. The chain crosses the membrane as a helical span at residues 24–44; sequence LCYILDAILFLYGIVLTLLYC. The Cytoplasmic segment spans residues 45 to 85; sequence RLKLQVRKAATASEKSDGIYTGLSTRTQETYETLKHEKPPQ. One can recognise an ITAM domain in the interval 53–81; sequence AATASEKSDGIYTGLSTRTQETYETLKHE. Position 64 is a phosphotyrosine (Y64). Position 68 is a phosphoserine (S68). Y75 is modified (phosphotyrosine). T77 bears the Phosphothreonine mark.

Belongs to the CD3Z/FCER1G family. As to quaternary structure, igE Fc receptor is a tetramer of an alpha chain, a beta chain, and two disulfide linked gamma chains. Associates with FCGR1A; forms a functional signaling complex. The signaling subunit of immunoglobulin gamma (IgG) Fc receptor complex. As a homodimer or a heterodimer of CD247 and FCER1G, associates with the ligand binding subunit FCGR3A to form a functional receptor complex. Associates with CLEC6A. Interacts with CLEC4E. Interacts (via ITAM domain) with SYK (via SH2 domains); activates SYK, enabling integrin-mediated activation of neutrophils and macrophages. Interacts with CSF2RB and recruits SYK in response to IL3 stimulation; this interaction is direct. Interacts with CD300LH; the interaction may be indirect. Interacts with CD300LD. Interacts with TARM1.

The protein resides in the cell membrane. Adapter protein containing an immunoreceptor tyrosine-based activation motif (ITAM) that transduces activation signals from various immunoreceptors. As a component of the high-affinity immunoglobulin E (IgE) receptor, mediates allergic inflammatory signaling in mast cells. As a constitutive component of interleukin-3 receptor complex, selectively mediates interleukin 4/IL4 production by basophils priming T-cells toward effector T-helper 2 subset. Associates with pattern recognition receptors CLEC4D and CLEC4E to form a functional signaling complex in myeloid cells. Binding of mycobacterial trehalose 6,6'-dimycolate (TDM) to this receptor complex leads to phosphorylation of ITAM, triggering activation of SYK, CARD9 and NF-kappa-B, consequently driving maturation of antigen-presenting cells and shaping antigen-specific priming of T-cells toward effector T-helper 1 and T-helper 17 cell subtypes. May function cooperatively with other activating receptors. Functionally linked to integrin beta-2/ITGB2-mediated neutrophil activation. Also involved in integrin alpha-2/ITGA2-mediated platelet activation. This is High affinity immunoglobulin epsilon receptor subunit gamma (FCER1G) from Bos taurus (Bovine).